The primary structure comprises 470 residues: Putative multidrug resistance protein MdtD (470 aa).

Residues 1-11 (MTELPDNTRWQ) are Periplasmic-facing. The chain crosses the membrane as a helical span at residues 12–32 (LWIVAFGFFMQSLDTTIVNTA). Residues 33 to 48 (LPSMAKSLGESPLHMH) lie on the Cytoplasmic side of the membrane. A helical membrane pass occupies residues 49 to 69 (MVVVSYVLTVAVMLPASGWLA). Residues 70–76 (DKIGVRN) lie on the Periplasmic side of the membrane. A helical membrane pass occupies residues 77 to 97 (IFFAAIVLFTLGSLFCALSGT). Residues 98–101 (LNQL) are Cytoplasmic-facing. Residues 102 to 124 (VLARVLQGVGGAMMVPVGRLTVM) form a helical membrane-spanning segment. Over 125 to 137 (KIVPRTQYMAAMT) the chain is Periplasmic. Residues 138 to 158 (FVTLPGQIGPLLGPALGGVLV) form a helical membrane-spanning segment. Residues 159-164 (EYASWH) are Cytoplasmic-facing. The helical transmembrane segment at 165 to 185 (WIFLINIPVGIVGAMATFMLM) threads the bilayer. Residues 186–196 (PNYTIETRRFD) are Periplasmic-facing. A helical membrane pass occupies residues 197–217 (LPGFLLLAIGMAVLTLALDGS). The Cytoplasmic portion of the chain corresponds to 218–224 (KSMGISP). A helical transmembrane segment spans residues 225–245 (WTLAGLAAGGAAAILLYLFHA). The Periplasmic segment spans residues 246–262 (KKNSGALFSLRLFRTPT). Residues 263-283 (FSLGLLGSFAGRIGSGMLPFM) traverse the membrane as a helical segment. Over 284-285 (TP) the chain is Cytoplasmic. Residues 286-306 (VFLQIGLGFSPFHAGLMMIPM) form a helical membrane-spanning segment. Topologically, residues 307-341 (VLGSMGMKRIVVQIVNRFGYRRVLVATTLGLALVS) are periplasmic. Residues 342-362 (LLFMSVALLGWYYLLPLVLLL) traverse the membrane as a helical segment. The Cytoplasmic segment spans residues 363 to 395 (QGMVNSARFSSMNTLTLKDLPDTLASSGNSLLS). The chain crosses the membrane as a helical span at residues 396–416 (MIMQLSMSIGVTIAGMLLGMF). Over 417–430 (GQQHIGIDSSATHH) the chain is Periplasmic. The chain crosses the membrane as a helical span at residues 431–451 (VFMYTWLCMAVIIALPAIIFA). Residues 452–470 (RVPNDTQQNMVISRRKRSL) are Cytoplasmic-facing.

This sequence belongs to the major facilitator superfamily. TCR/Tet family.

It is found in the cell inner membrane. In Salmonella dublin (strain CT_02021853), this protein is Putative multidrug resistance protein MdtD.